Reading from the N-terminus, the 113-residue chain is Integration host factor subunit alpha (113 aa).

This sequence belongs to the bacterial histone-like protein family. As to quaternary structure, heterodimer of an alpha and a beta chain.

This protein is one of the two subunits of integration host factor, a specific DNA-binding protein that functions in genetic recombination as well as in transcriptional and translational control. The sequence is that of Integration host factor subunit alpha from Rhodopseudomonas palustris (strain BisA53).